Here is a 387-residue protein sequence, read N- to C-terminus: MTDNSSISLTPADLEHVPLQPTRLKQVGGDQACIKLSLDAREQTALDALAAKVSHAFVTGAGGFLGKAICQRLIAAGIKVTGFARGRYLELEALGVTMVQGDLVNPEQVKQAMQGCDIVFHVASKAGVWGDRDSYFCPNVKGAANVIAACKALKINKLVYTSTPSVTFAGEDESGINESTPYASRFLNYYAHSKAIAEKMMLDANQSSSTNAAYVLKTVALRPHLIWGPNDPHLVPRVLARGRLGKLKLVGREDKLVDTIYIDNAAYAHVLAALELCQATPKCQGKAYFISNDEPVTMAKMLNMILACDGLPPVTQRVPQMLAYAVGAVLETAYRLLNKQEEPIMTRFVAKQLSCSHYFDISAAKQDFGYSALVSIEEGMKRLKASL.

Tyrosine 190 serves as the catalytic Proton acceptor. Lysine 194 contacts NADP(+).

The protein belongs to the 3-beta-HSD family.

It carries out the reaction a (2R,3S)-2-alkyl-3-hydroxyalkanoate + NADP(+) = an (R)-2-alkyl-3-oxoalkanoate + NADPH + H(+). Involved in olefin biosynthesis. Catalyzes the reversible stereospecific NADPH-dependent reduction of 2-alkyl-3-oxoalkanoic acids to 2-alkyl-3-hydroxyalkanoic acids. The S.oneidensis oleABCD genes produce 3,6,9,12,15,19,22,25,28-hentriacontanonaene, which may aid the cells in adapting to a sudden drop in temperature. This Shewanella oneidensis (strain ATCC 700550 / JCM 31522 / CIP 106686 / LMG 19005 / NCIMB 14063 / MR-1) protein is 2-alkyl-3-oxoalkanoate reductase.